The chain runs to 204 residues: MPPMTRKTRIQPIEPVAEEDDNGYDRPSKSQLKREMHELQVLGQALVDLPKDALKRMPMPESLGDAVREARRITDHEGKRRQLQYVGRVMRSLTDDETAALRTALDAQRGVNKAATARLHWIERTREQLLASDDALTEFLRQHPDADIQEGRTLIRNARKEAQQGKPPRYFRELFQWIKAAGGASDSDDEAADDAGDDHDDDEA.

Disordered stretches follow at residues 1-31 and 182-204; these read MPPM…SKSQ and GGAS…DDEA. Residues 186–204 show a composition bias toward acidic residues; sequence DSDDEAADDAGDDHDDDEA.

This sequence belongs to the DarP family.

The protein resides in the cytoplasm. Member of a network of 50S ribosomal subunit biogenesis factors which assembles along the 30S-50S interface, preventing incorrect 23S rRNA structures from forming. Promotes peptidyl transferase center (PTC) maturation. In Burkholderia orbicola (strain MC0-3), this protein is Dual-action ribosomal maturation protein DarP.